Reading from the N-terminus, the 172-residue chain is Galectin-related protein (172 aa).

Ala-2 is modified (N-acetylalanine). A phosphoserine mark is found at Ser-22 and Ser-25. The 130-residue stretch at 39–168 (PFCGHIKGGM…TIKINGDLQI (130 aa)) folds into the Galectin domain.

In terms of assembly, monomer.

In terms of biological role, does not bind lactose, and may not bind carbohydrates. The polypeptide is Galectin-related protein (Lgalsl) (Mus musculus (Mouse)).